The sequence spans 460 residues: Vitamin K-dependent protein C (460 aa).

A signal peptide spans 1-18; the sequence is MWQFRVFLLLMSTWGISS. A propeptide spanning residues 19-41 is cleaved from the precursor; that stretch reads IPAHPDPVFSSSEHAHQVLRVRR. The Gla domain occupies 42-87; sequence ANSFLEEMRPGSLERECMEEICDFEEAQEIFQNVEDTLAFWIKYFD. 10 positions are modified to 4-carboxyglutamate: E47, E48, E55, E57, E60, E61, E66, E67, E70, and E76. C58 and C63 are oxidised to a cystine. 9 cysteine pairs are disulfide-bonded: C91–C110, C100–C105, C104–C119, C121–C130, C139–C150, C146–C159, C161–C174, C182–C319, and C238–C254. EGF-like domains lie at 96-131 and 135-175; these read LDHQ…KFCQ and RFQD…MRCK. (3R)-3-hydroxyaspartate is present on D112. The Peptidase S1 domain maps to 213 to 449; that stretch reads VNGTLTKQGD…YLKWIHSYIG (237 aa). N214 carries an N-linked (GlcNAc...) asparagine glycan. The Charge relay system role is filled by H253. A glycan (N-linked (GlcNAc...) asparagine) is linked at N290. D299 serves as the catalytic Charge relay system. N354 carries an N-linked (GlcNAc...) asparagine glycan. Cystine bridges form between C372-C386 and C397-C425. The active-site Charge relay system is the S401.

The protein belongs to the peptidase S1 family. Synthesized as a single chain precursor, which is cleaved into a light chain and a heavy chain held together by a disulfide bond. The enzyme is then activated by thrombin, which cleaves a tetradecapeptide from the amino end of the heavy chain; this reaction, which occurs at the surface of endothelial cells, is strongly promoted by thrombomodulin. The vitamin K-dependent, enzymatic carboxylation of some Glu residues allows the modified protein to bind calcium. In terms of processing, the iron and 2-oxoglutarate dependent 3-hydroxylation of aspartate and asparagine is (R) stereospecific within EGF domains. In terms of tissue distribution, plasma; synthesized in the liver.

Its subcellular location is the secreted. The protein localises to the golgi apparatus. It is found in the endoplasmic reticulum. The catalysed reaction is Degradation of blood coagulation factors Va and VIIIa.. Functionally, protein C is a vitamin K-dependent serine protease that regulates blood coagulation by inactivating factors Va and VIIIa in the presence of calcium ions and phospholipids. Exerts a protective effect on the endothelial cell barrier function. The chain is Vitamin K-dependent protein C (Proc) from Mus musculus (Mouse).